Here is a 113-residue protein sequence, read N- to C-terminus: MKQFAFPKYERLLKRSEFVQFTNARQRIHTAHFILLWTHTEDSTLKIGITVSRKVGNSVIRNRVKRLVREFYRLNKSRFVMAHYNIIAKKGAEQLDFQRLSRELANVLERLHK.

The protein belongs to the RnpA family. In terms of assembly, consists of a catalytic RNA component (M1 or rnpB) and a protein subunit.

It carries out the reaction Endonucleolytic cleavage of RNA, removing 5'-extranucleotides from tRNA precursor.. RNaseP catalyzes the removal of the 5'-leader sequence from pre-tRNA to produce the mature 5'-terminus. It can also cleave other RNA substrates such as 4.5S RNA. The protein component plays an auxiliary but essential role in vivo by binding to the 5'-leader sequence and broadening the substrate specificity of the ribozyme. The protein is Ribonuclease P protein component of Geotalea uraniireducens (strain Rf4) (Geobacter uraniireducens).